A 169-amino-acid polypeptide reads, in one-letter code: MAAPIKFPFRPRGGQPREDTTPKRGLRRYLLELKESNKEFWLSGHAVFKLLSLGCMISALDYFETMLPHPVLILLICMEAAICIFFIFLNTLAINRYIPFVFWPMADIFNSLFSCVFLGGGIYFAFKARRLLPKPYLTAMILMGAAAICSFIDMLLQFQHFRGLRLRKW.

Helical transmembrane passes span 40–60 (FWLS…ISAL), 69–89 (HPVL…FIFL), 98–118 (IPFV…CVFL), and 136–156 (YLTA…DMLL). The MARVEL domain occupies 40 to 162 (FWLSGHAVFK…DMLLQFQHFR (123 aa)).

This sequence belongs to the chemokine-like factor family.

The protein localises to the membrane. The chain is CKLF-like MARVEL transmembrane domain-containing protein 2A (Cmtm2a) from Mus musculus (Mouse).